The primary structure comprises 170 residues: Small ribosomal subunit protein bS18c (170 aa).

Disordered regions lie at residues 1–60 and 149–170; these read MYTS…GPGD and NRNL…SSDC. 7 consecutive repeats follow at residues 4-10, 11-17, 18-24, 25-31, 32-38, 39-45, and 46-52; these read SKQPFLK, SKQPFSK, SEQPFSK, SEQPFRK, SKQTFRK, FKQPFRK, and SKQPFRR. The 7 X 7 AA tandem repeats stretch occupies residues 4 to 52; the sequence is SKQPFLKSKQPFSKSEQPFSKSEQPFRKSKQTFRKFKQPFRKSKQPFRR. A compositionally biased stretch (polar residues) spans 13–26; the sequence is QPFSKSEQPFSKSE. Residues 30–55 show a composition bias toward basic residues; the sequence is RKSKQTFRKFKQPFRKSKQPFRRRPR.

It belongs to the bacterial ribosomal protein bS18 family. As to quaternary structure, part of the 30S ribosomal subunit.

The protein localises to the plastid. Its subcellular location is the chloroplast. The polypeptide is Small ribosomal subunit protein bS18c (rps18) (Secale cereale (Rye)).